The chain runs to 505 residues: Bile acid-sensitive ion channel (505 aa).

The tract at residues 1 to 30 (MEQTEKSKVYAENGLLEKIKLCLSKKPLPS) is binds the plasma membrane and stabilizes the channel in the closed state. At 1–61 (MEQTEKSKVY…NIVQNRSKIR (61 aa)) the chain is on the cytoplasmic side. The chain crosses the membrane as a helical span at residues 62–82 (RVLWLVVVLGSVSLVTWQIYI). At 83–459 (RLLNYFTWPT…GLFCGASLIT (377 aa)) the chain is on the extracellular side. 6 cysteine pairs are disulfide-bonded: Cys-112-Cys-207, Cys-185-Cys-192, Cys-298-Cys-377, Cys-315-Cys-373, Cys-328-Cys-350, and Cys-330-Cys-342. N-linked (GlcNAc...) asparagine glycosylation is found at Asn-147, Asn-163, Asn-178, and Asn-179. Asn-306 carries an N-linked (GlcNAc...) asparagine glycan. N-linked (GlcNAc...) asparagine glycosylation is found at Asn-370, Asn-405, and Asn-421. The GAS motif; ion selectivity filter signature appears at 454–456 (GAS). Residues 460–480 (IIEIIEYLFTNFYWICIFFLL) traverse the membrane as a helical segment. Topologically, residues 481–505 (KISEMTQWTPPPQNHLGNKNRIEEC) are cytoplasmic.

The protein belongs to the amiloride-sensitive sodium channel (TC 1.A.6) family. ASIC5 subfamily. Forms homotrimeric channels. In terms of tissue distribution, detected in small intestine, duodenum and jejunum. Detected at very low levels in testis and rectum.

Its subcellular location is the apical cell membrane. The protein localises to the cell membrane. The enzyme catalyses Na(+)(in) = Na(+)(out). It carries out the reaction Li(+)(in) = Li(+)(out). The catalysed reaction is K(+)(in) = K(+)(out). It catalyses the reaction H(+)(in) = H(+)(out). Its activity is regulated as follows. Inhibited by the diuretic drug amiloride. Its function is as follows. Forms bile acid-gated sodium channels and may play a role in bile acid-dependent absorption and secretion by epithelial cells of the bile ducts. Displays high selectivity for sodium ions but can also permit the permeation of other cations. The gating could be indirect and the consequence of alterations of the membrane environment of the channel by bile acids. As a sodium channel of type II unipolar brush cells of the vestibulocerebellum, controlling the electrical activity of these cells, could play a role in motor coordination and balance. The sequence is that of Bile acid-sensitive ion channel from Homo sapiens (Human).